The following is a 377-amino-acid chain: Carboxynorspermidine/carboxyspermidine decarboxylase (377 aa).

Lysine 41 carries the post-translational modification N6-(pyridoxal phosphate)lysine. Residues glutamate 238 and aspartate 274 each contribute to the substrate site.

The protein belongs to the Orn/Lys/Arg decarboxylase class-II family. NspC subfamily. Homodimer. Pyridoxal 5'-phosphate serves as cofactor.

The protein resides in the cytoplasm. The catalysed reaction is carboxynorspermidine + H(+) = norspermidine + CO2. The enzyme catalyses carboxyspermidine + H(+) = spermidine + CO2. In terms of biological role, catalyzes the decarboxylation of carboxynorspermidine and carboxyspermidine. Carboxynorspermidine is decarboxylated 20-fold more efficiently than carboxyspermidine. Exhibits some activity with L-ornithine, but shows no activity with L-arginine, L-lysine or meso-diaminopimelate. The protein is Carboxynorspermidine/carboxyspermidine decarboxylase of Vibrio vulnificus (strain CMCP6).